Consider the following 430-residue polypeptide: 3-oxo-tetronate kinase (430 aa).

ATP is bound by residues Ser268, 366 to 369 (GGET), and Gly410.

Belongs to the four-carbon acid sugar kinase family.

The enzyme catalyses 3-dehydro-L-erythronate + ATP = 3-dehydro-4-O-phospho-L-erythronate + ADP + H(+). It catalyses the reaction 3-dehydro-D-erythronate + ATP = 3-dehydro-4-O-phospho-D-erythronate + ADP + H(+). Catalyzes the ATP-dependent phosphorylation of 3-oxo-tetronate to 3-oxo-tetronate 4-phosphate. This Pseudomonas fluorescens (strain ATCC BAA-477 / NRRL B-23932 / Pf-5) protein is 3-oxo-tetronate kinase.